The following is a 198-amino-acid chain: Superoxide dismutase [Fe] (198 aa).

Fe cation is bound by residues H27, H74, D158, and H162.

It belongs to the iron/manganese superoxide dismutase family. Homodimer. The cofactor is Fe cation.

The protein resides in the cytoplasm. It catalyses the reaction 2 superoxide + 2 H(+) = H2O2 + O2. Its function is as follows. Destroys superoxide anion radicals which are normally produced within the cells and which are toxic to biological systems. This Plasmodium malariae protein is Superoxide dismutase [Fe] (SODB).